We begin with the raw amino-acid sequence, 316 residues long: 4-hydroxy-3-methylbut-2-enyl diphosphate reductase (316 aa).

Residue Cys12 coordinates [4Fe-4S] cluster. (2E)-4-hydroxy-3-methylbut-2-enyl diphosphate is bound by residues His43 and His81. 2 residues coordinate dimethylallyl diphosphate: His43 and His81. Isopentenyl diphosphate-binding residues include His43 and His81. Cys103 lines the [4Fe-4S] cluster pocket. His131 lines the (2E)-4-hydroxy-3-methylbut-2-enyl diphosphate pocket. His131 contributes to the dimethylallyl diphosphate binding site. Position 131 (His131) interacts with isopentenyl diphosphate. Residue Glu133 is the Proton donor of the active site. Thr170 contacts (2E)-4-hydroxy-3-methylbut-2-enyl diphosphate. A [4Fe-4S] cluster-binding site is contributed by Cys198. 3 residues coordinate (2E)-4-hydroxy-3-methylbut-2-enyl diphosphate: Ser226, Asn228, and Ser271. Dimethylallyl diphosphate contacts are provided by Ser226, Asn228, and Ser271. Isopentenyl diphosphate-binding residues include Ser226, Asn228, and Ser271.

It belongs to the IspH family. [4Fe-4S] cluster is required as a cofactor.

It catalyses the reaction isopentenyl diphosphate + 2 oxidized [2Fe-2S]-[ferredoxin] + H2O = (2E)-4-hydroxy-3-methylbut-2-enyl diphosphate + 2 reduced [2Fe-2S]-[ferredoxin] + 2 H(+). The enzyme catalyses dimethylallyl diphosphate + 2 oxidized [2Fe-2S]-[ferredoxin] + H2O = (2E)-4-hydroxy-3-methylbut-2-enyl diphosphate + 2 reduced [2Fe-2S]-[ferredoxin] + 2 H(+). It functions in the pathway isoprenoid biosynthesis; dimethylallyl diphosphate biosynthesis; dimethylallyl diphosphate from (2E)-4-hydroxy-3-methylbutenyl diphosphate: step 1/1. It participates in isoprenoid biosynthesis; isopentenyl diphosphate biosynthesis via DXP pathway; isopentenyl diphosphate from 1-deoxy-D-xylulose 5-phosphate: step 6/6. In terms of biological role, catalyzes the conversion of 1-hydroxy-2-methyl-2-(E)-butenyl 4-diphosphate (HMBPP) into a mixture of isopentenyl diphosphate (IPP) and dimethylallyl diphosphate (DMAPP). Acts in the terminal step of the DOXP/MEP pathway for isoprenoid precursor biosynthesis. The polypeptide is 4-hydroxy-3-methylbut-2-enyl diphosphate reductase (Bacillus cereus (strain B4264)).